The chain runs to 455 residues: UDP-N-acetylmuramoylalanine--D-glutamate ligase (455 aa).

117 to 123 (GTNGKTT) contacts ATP.

The protein belongs to the MurCDEF family.

It is found in the cytoplasm. The catalysed reaction is UDP-N-acetyl-alpha-D-muramoyl-L-alanine + D-glutamate + ATP = UDP-N-acetyl-alpha-D-muramoyl-L-alanyl-D-glutamate + ADP + phosphate + H(+). It functions in the pathway cell wall biogenesis; peptidoglycan biosynthesis. In terms of biological role, cell wall formation. Catalyzes the addition of glutamate to the nucleotide precursor UDP-N-acetylmuramoyl-L-alanine (UMA). The chain is UDP-N-acetylmuramoylalanine--D-glutamate ligase from Pelotomaculum thermopropionicum (strain DSM 13744 / JCM 10971 / SI).